Reading from the N-terminus, the 150-residue chain is Large ribosomal subunit protein uL11 (150 aa).

The protein belongs to the universal ribosomal protein uL11 family. As to quaternary structure, part of the ribosomal stalk of the 50S ribosomal subunit. Interacts with L10 and the large rRNA to form the base of the stalk. L10 forms an elongated spine to which L12 dimers bind in a sequential fashion forming a multimeric L10(L12)X complex. In terms of processing, one or more lysine residues are methylated.

In terms of biological role, forms part of the ribosomal stalk which helps the ribosome interact with GTP-bound translation factors. In Cereibacter sphaeroides (strain KD131 / KCTC 12085) (Rhodobacter sphaeroides), this protein is Large ribosomal subunit protein uL11.